A 358-amino-acid chain; its full sequence is MKPFPRAEISRKALKHNLARLHELAPSSKVMAVVKANGYGHGLLNVAQCLDNADGFGLARLEEALALRTGGVTAKLLLLEGFFRIGDLTTLVEHDIETVVHHESQLEMLESINLTKPVTVWLKVDSGMHRLGFSPAQFDATYQRLMANDNVAKPIHLMTHFACADEPSNPSTAEQQRVFDTLIKGLPGDRTLANSAGALFWQQSQADWIRPGIALYGVSPVFGDLGAKHGLMPAMDLVSQLIAIREHKAGESAGYGSYWTAEKDTNLGVVAIGYGDGYPRNAPLGTPVLVNGRIVPIVGRVSMDMLTVDLGIDANDKVGDLAVLWGKELPVEEVAEHIGTIAYELVTKLTPRVAVCLD.

Lys35 serves as the catalytic Proton acceptor; specific for D-alanine. N6-(pyridoxal phosphate)lysine is present on Lys35. Substrate is bound at residue Arg130. The active-site Proton acceptor; specific for L-alanine is the Tyr255. Met303 lines the substrate pocket.

The protein belongs to the alanine racemase family. Pyridoxal 5'-phosphate is required as a cofactor.

It carries out the reaction L-alanine = D-alanine. It participates in amino-acid biosynthesis; D-alanine biosynthesis; D-alanine from L-alanine: step 1/1. Its function is as follows. Catalyzes the interconversion of L-alanine and D-alanine. May also act on other amino acids. This Shewanella piezotolerans (strain WP3 / JCM 13877) protein is Alanine racemase (alr).